The primary structure comprises 475 residues: Protein arginine N-methyltransferase 2 (475 aa).

The disordered stretch occupies residues Glu167–Gly194. Residues Leu169–Gly194 show a composition bias toward acidic residues. In terms of domain architecture, RMT2 spans Leu247–Phe475. S-adenosyl-L-methionine is bound by residues Tyr254, Met285, Phe310–Ile315, Glu331–His333, Trp358–Gln359, and Asp378.

Belongs to the class I-like SAM-binding methyltransferase superfamily. RMT2 methyltransferase family. As to quaternary structure, monomer.

The protein resides in the cytoplasm. The protein localises to the nucleus. S-adenosyl-L-methionine-dependent protein-arginine N-methyltransferase that methylates the delta-nitrogen atom of arginine residues to form N5-methylarginine (type IV) in target proteins. Monomethylates ribosomal protein L12. This chain is Protein arginine N-methyltransferase 2, found in Yarrowia lipolytica (strain CLIB 122 / E 150) (Yeast).